Here is a 146-residue protein sequence, read N- to C-terminus: 3-hydroxyacyl-[acyl-carrier-protein] dehydratase FabZ (146 aa).

Residue His48 is part of the active site.

Belongs to the thioester dehydratase family. FabZ subfamily.

Its subcellular location is the cytoplasm. The enzyme catalyses a (3R)-hydroxyacyl-[ACP] = a (2E)-enoyl-[ACP] + H2O. Involved in unsaturated fatty acids biosynthesis. Catalyzes the dehydration of short chain beta-hydroxyacyl-ACPs and long chain saturated and unsaturated beta-hydroxyacyl-ACPs. The polypeptide is 3-hydroxyacyl-[acyl-carrier-protein] dehydratase FabZ (Acetivibrio thermocellus (strain ATCC 27405 / DSM 1237 / JCM 9322 / NBRC 103400 / NCIMB 10682 / NRRL B-4536 / VPI 7372) (Clostridium thermocellum)).